Reading from the N-terminus, the 105-residue chain is Large ribosomal subunit protein bL21 (105 aa).

The protein belongs to the bacterial ribosomal protein bL21 family. As to quaternary structure, part of the 50S ribosomal subunit. Contacts protein L20.

This protein binds to 23S rRNA in the presence of protein L20. The polypeptide is Large ribosomal subunit protein bL21 (Phocaeicola vulgatus (strain ATCC 8482 / DSM 1447 / JCM 5826 / CCUG 4940 / NBRC 14291 / NCTC 11154) (Bacteroides vulgatus)).